The chain runs to 361 residues: Chorismate synthase (361 aa).

Residues Arg48 and Arg54 each coordinate NADP(+). Residues 125–127 (RSS), 238–239 (NA), Gly278, 293–297 (KPTSS), and Arg319 each bind FMN.

This sequence belongs to the chorismate synthase family. In terms of assembly, homotetramer. The cofactor is FMNH2.

It carries out the reaction 5-O-(1-carboxyvinyl)-3-phosphoshikimate = chorismate + phosphate. The protein operates within metabolic intermediate biosynthesis; chorismate biosynthesis; chorismate from D-erythrose 4-phosphate and phosphoenolpyruvate: step 7/7. In terms of biological role, catalyzes the anti-1,4-elimination of the C-3 phosphate and the C-6 proR hydrogen from 5-enolpyruvylshikimate-3-phosphate (EPSP) to yield chorismate, which is the branch point compound that serves as the starting substrate for the three terminal pathways of aromatic amino acid biosynthesis. This reaction introduces a second double bond into the aromatic ring system. This Escherichia coli O1:K1 / APEC protein is Chorismate synthase.